The following is a 131-amino-acid chain: Small ribosomal subunit protein uS8 (131 aa).

Belongs to the universal ribosomal protein uS8 family. As to quaternary structure, part of the 30S ribosomal subunit. Contacts proteins S5 and S12.

Its function is as follows. One of the primary rRNA binding proteins, it binds directly to 16S rRNA central domain where it helps coordinate assembly of the platform of the 30S subunit. The polypeptide is Small ribosomal subunit protein uS8 (Phocaeicola vulgatus (strain ATCC 8482 / DSM 1447 / JCM 5826 / CCUG 4940 / NBRC 14291 / NCTC 11154) (Bacteroides vulgatus)).